The primary structure comprises 119 residues: uncharacterized protein (119 aa).

2 helical membrane-spanning segments follow: residues 53–73 and 92–112; these read AATI…SFLA and FITH…WFLF.

It localises to the membrane. This is an uncharacterized protein from Saccharomyces cerevisiae (strain ATCC 204508 / S288c) (Baker's yeast).